Consider the following 156-residue polypeptide: Small ribosomal subunit protein uS7 (156 aa).

The protein belongs to the universal ribosomal protein uS7 family. In terms of assembly, part of the 30S ribosomal subunit. Contacts proteins S9 and S11.

Its function is as follows. One of the primary rRNA binding proteins, it binds directly to 16S rRNA where it nucleates assembly of the head domain of the 30S subunit. Is located at the subunit interface close to the decoding center, probably blocks exit of the E-site tRNA. This is Small ribosomal subunit protein uS7 from Jannaschia sp. (strain CCS1).